We begin with the raw amino-acid sequence, 817 residues long: MASIAHLIFSGLLAATVANSQQYEGSSRNEDAFNYVQPRNTTIFGQYGHSPAVLPSPNSTGLGEWHAAYAKAREFVSLLTLEEKADMVTGQPGPCVGNIVAIPRLGFNGLCLQDGPMAIRVADYASVFSAGVTAASTWDRDILYERAFAMGQEFRAKGAHIALSPVAGPLGRSAYGGRNWEGFAADPYLTGIAMELSVQGYHDAGVQATPKHFIGNEQETQRNPTFDPNGTVTDVLQEALSSNIDDRTMHELYLWPFANAAHAKAASFMCSYQRLNGSYACQNSKVLNGLLKEELGFQGYVMSDWGGTHSGVASIEAGLDMNMPGGLGPYGTIPEAGSFFGGNVTQAVKNGTVDEARVDDMIVRIMTPYYWLGQDQDFPSVDPSSADLNTFSPRSTWLREFNLTGERSRDVRGDHAKLIRRHGAEATILLKNENNALPLKSPKALAIFGNDAGEPTMGAVNKANFEFGTLAAGGGSGTGRFTYVVSSLEAIKSRAKRANTLVQYWLNNTEVATTDVTTLWVPTPPDACLVFLKTWAEEGEDREHLSVDYDGNNVVFSVARKCNNTIVITHSSGINELPFADHPNVTAILAAHYPGQESGNSIVDVLYGDVNPSGRLPYTIARNGSDYNAPPTTEIATTGKEDWQAWFDEKLEIDYRYFDAHNISVLYEFGFGLSYTTFNLSDINAEPLVKSISSVPEQLPIQPGGNPALWENVYNVSVVVTNSGDVKGKAVPQLYVTFPDNTPAGTPPKQLRGFDKVPLKPGESRAVSFQLMRRDLSYWDVVSQQWLIPEGEFVIRVGFSSRDLREMIRITPVTDST.

The N-terminal stretch at 1-20 (MASIAHLIFSGLLAATVANS) is a signal peptide. Residues Asn-40, Asn-58, Asn-229, and Asn-276 are each glycosylated (N-linked (GlcNAc...) asparagine). The active site involves Asp-304. N-linked (GlcNAc...) asparagine glycans are attached at residues Asn-343, Asn-350, Asn-402, Asn-507, Asn-563, Asn-584, Asn-623, Asn-662, Asn-679, and Asn-715.

Belongs to the glycosyl hydrolase 3 family.

It is found in the secreted. The catalysed reaction is Hydrolysis of terminal, non-reducing beta-D-glucosyl residues with release of beta-D-glucose.. Its pathway is glycan metabolism; cellulose degradation. Beta-glucosidases are one of a number of cellulolytic enzymes involved in the degradation of cellulosic biomass. Catalyzes the last step releasing glucose from the inhibitory cellobiose. The chain is Probable beta-glucosidase G (bglG) from Neosartorya fischeri (strain ATCC 1020 / DSM 3700 / CBS 544.65 / FGSC A1164 / JCM 1740 / NRRL 181 / WB 181) (Aspergillus fischerianus).